The primary structure comprises 552 residues: Dihydroxy-acid dehydratase (552 aa).

Position 46 (Cys46) interacts with [2Fe-2S] cluster. Asp78 is a Mg(2+) binding site. Residue Cys119 participates in [2Fe-2S] cluster binding. Residues Asp120 and Lys121 each contribute to the Mg(2+) site. Lys121 carries the N6-carboxylysine modification. Cys191 contacts [2Fe-2S] cluster. Glu442 is a Mg(2+) binding site. Ser468 acts as the Proton acceptor in catalysis.

It belongs to the IlvD/Edd family. In terms of assembly, homodimer. It depends on [2Fe-2S] cluster as a cofactor. Requires Mg(2+) as cofactor.

It catalyses the reaction (2R)-2,3-dihydroxy-3-methylbutanoate = 3-methyl-2-oxobutanoate + H2O. The catalysed reaction is (2R,3R)-2,3-dihydroxy-3-methylpentanoate = (S)-3-methyl-2-oxopentanoate + H2O. Its pathway is amino-acid biosynthesis; L-isoleucine biosynthesis; L-isoleucine from 2-oxobutanoate: step 3/4. The protein operates within amino-acid biosynthesis; L-valine biosynthesis; L-valine from pyruvate: step 3/4. Functions in the biosynthesis of branched-chain amino acids. Catalyzes the dehydration of (2R,3R)-2,3-dihydroxy-3-methylpentanoate (2,3-dihydroxy-3-methylvalerate) into 2-oxo-3-methylpentanoate (2-oxo-3-methylvalerate) and of (2R)-2,3-dihydroxy-3-methylbutanoate (2,3-dihydroxyisovalerate) into 2-oxo-3-methylbutanoate (2-oxoisovalerate), the penultimate precursor to L-isoleucine and L-valine, respectively. In Picrophilus torridus (strain ATCC 700027 / DSM 9790 / JCM 10055 / NBRC 100828 / KAW 2/3), this protein is Dihydroxy-acid dehydratase.